The sequence spans 279 residues: UTP--glucose-1-phosphate uridylyltransferase (279 aa).

Belongs to the UDPGP type 2 family.

It carries out the reaction alpha-D-glucose 1-phosphate + UTP + H(+) = UDP-alpha-D-glucose + diphosphate. May play a role in stationary phase survival. This chain is UTP--glucose-1-phosphate uridylyltransferase (galU), found in Pseudomonas aeruginosa (strain ATCC 15692 / DSM 22644 / CIP 104116 / JCM 14847 / LMG 12228 / 1C / PRS 101 / PAO1).